Here is a 345-residue protein sequence, read N- to C-terminus: MIILGLETSCDETSAAVVQNGKVLSNIVSSQCCHTDFGGVVPELASREHERLMVAITDAALSEANITKNDLDVIAATAGPGLIGAVMVGLCFAQSMAWALQVPFVPVNHIEAHMFSPFIEAGAAKGVPEEPFISLTVSGGHTLLSIIGTDLSRRIIGRTLDDAAGEAFDKTGKMLGLSYPAGPEIDRLAKQGNPSFHRFPRALTAQSQTSKSYRGNYDFSFSGLKTSVLTWLQKQSPEYIDRHRADIAASIQDAIVSVLQEKTVAAALCHQINSIAIAGGVSANSALRAAMEKECSRQGIRLHLPGPVYSTDNAAMIAALCELQISRGMRPERRYSTAPFAGMPS.

Fe cation-binding residues include His-109 and His-113. Substrate contacts are provided by residues 136–140, Asp-169, Gly-182, Asp-186, and Asn-284; that span reads TVSGG. Fe cation is bound at residue Asp-312.

It belongs to the KAE1 / TsaD family. Fe(2+) is required as a cofactor.

It localises to the cytoplasm. The catalysed reaction is L-threonylcarbamoyladenylate + adenosine(37) in tRNA = N(6)-L-threonylcarbamoyladenosine(37) in tRNA + AMP + H(+). Functionally, required for the formation of a threonylcarbamoyl group on adenosine at position 37 (t(6)A37) in tRNAs that read codons beginning with adenine. Is involved in the transfer of the threonylcarbamoyl moiety of threonylcarbamoyl-AMP (TC-AMP) to the N6 group of A37, together with TsaE and TsaB. TsaD likely plays a direct catalytic role in this reaction. The polypeptide is tRNA N6-adenosine threonylcarbamoyltransferase (Chlorobium phaeovibrioides (strain DSM 265 / 1930) (Prosthecochloris vibrioformis (strain DSM 265))).